The following is a 337-amino-acid chain: Transaldolase (337 aa).

Positions 1–10 match the Nuclear localization signal motif; it reads MSGSPVKRQR. Lysine 142 functions as the Schiff-base intermediate with substrate in the catalytic mechanism. Lysine 219 is modified (N6-acetyllysine). A phosphoserine mark is found at serine 237 and serine 256. N6-acetyllysine occurs at positions 269, 286, and 321.

Belongs to the transaldolase family. Type 1 subfamily. Homodimer. Interacts with KPNA1 and KPNA4.

Its subcellular location is the nucleus. It localises to the cytoplasm. It catalyses the reaction D-sedoheptulose 7-phosphate + D-glyceraldehyde 3-phosphate = D-erythrose 4-phosphate + beta-D-fructose 6-phosphate. Its pathway is carbohydrate degradation; pentose phosphate pathway; D-glyceraldehyde 3-phosphate and beta-D-fructose 6-phosphate from D-ribose 5-phosphate and D-xylulose 5-phosphate (non-oxidative stage): step 2/3. Functionally, catalyzes the rate-limiting step of the non-oxidative phase in the pentose phosphate pathway. Catalyzes the reversible conversion of sedheptulose-7-phosphate and D-glyceraldehyde 3-phosphate into erythrose-4-phosphate and beta-D-fructose 6-phosphate. This Sus scrofa (Pig) protein is Transaldolase (TALDO1).